The sequence spans 759 residues: uncharacterized protein (759 aa).

The MCM domain maps to 352–556; it reads VIQKLSDYAF…KDEDIADFSI (205 aa). 397-404 is an ATP binding site; it reads SDPGVGKS.

Belongs to the MCM family.

This is an uncharacterized protein from Methanocaldococcus jannaschii (strain ATCC 43067 / DSM 2661 / JAL-1 / JCM 10045 / NBRC 100440) (Methanococcus jannaschii).